The primary structure comprises 930 residues: Probable outer membrane protein pmp8 (930 aa).

The signal sequence occupies residues 1-26 (MKIPLHKLLISSTLVTPILLSIATYG). An Autotransporter domain is found at 636–930 (SIYQQRGLWA…NVDCGLRYSF (295 aa)).

This sequence belongs to the PMP outer membrane protein family.

The protein localises to the secreted. It localises to the cell wall. The protein resides in the cell outer membrane. The sequence is that of Probable outer membrane protein pmp8 (pmp8) from Chlamydia pneumoniae (Chlamydophila pneumoniae).